Consider the following 625-residue polypeptide: Phosphomethylpyrimidine synthase (625 aa).

Substrate contacts are provided by residues Asn-230, Met-259, Tyr-288, His-324, 344–346 (SRG), 385–388 (DGLR), and Glu-424. A Zn(2+)-binding site is contributed by His-428. Substrate is bound at residue Tyr-451. His-492 contributes to the Zn(2+) binding site. [4Fe-4S] cluster is bound by residues Cys-572, Cys-575, and Cys-580.

It belongs to the ThiC family. Homodimer. [4Fe-4S] cluster serves as cofactor.

It carries out the reaction 5-amino-1-(5-phospho-beta-D-ribosyl)imidazole + S-adenosyl-L-methionine = 4-amino-2-methyl-5-(phosphooxymethyl)pyrimidine + CO + 5'-deoxyadenosine + formate + L-methionine + 3 H(+). The protein operates within cofactor biosynthesis; thiamine diphosphate biosynthesis. Catalyzes the synthesis of the hydroxymethylpyrimidine phosphate (HMP-P) moiety of thiamine from aminoimidazole ribotide (AIR) in a radical S-adenosyl-L-methionine (SAM)-dependent reaction. The protein is Phosphomethylpyrimidine synthase of Xanthomonas axonopodis pv. citri (strain 306).